The sequence spans 356 residues: Tungsten-containing aldehyde ferredoxin oxidoreductase cofactor-modifying protein (356 aa).

The Radical SAM core domain maps to 1 to 214; sequence MKYLYLEITS…PIVNELYKIA (214 aa). The [4Fe-4S] cluster site is built by C12, C16, and C19.

This sequence belongs to the radical SAM superfamily. The cofactor is [4Fe-4S] cluster.

In terms of biological role, involved in the biosynthesis of a molybdopterin-based tungsten cofactor. The polypeptide is Tungsten-containing aldehyde ferredoxin oxidoreductase cofactor-modifying protein (cmo) (Pyrococcus furiosus (strain ATCC 43587 / DSM 3638 / JCM 8422 / Vc1)).